A 310-amino-acid chain; its full sequence is Ribosomal protein L11 methyltransferase (310 aa).

T153, G174, D196, and N239 together coordinate S-adenosyl-L-methionine.

The protein belongs to the methyltransferase superfamily. PrmA family.

It localises to the cytoplasm. It catalyses the reaction L-lysyl-[protein] + 3 S-adenosyl-L-methionine = N(6),N(6),N(6)-trimethyl-L-lysyl-[protein] + 3 S-adenosyl-L-homocysteine + 3 H(+). Methylates ribosomal protein L11. This Janthinobacterium sp. (strain Marseille) (Minibacterium massiliensis) protein is Ribosomal protein L11 methyltransferase.